The following is a 993-amino-acid chain: DNA double-strand break repair Rad50 ATPase (993 aa).

ATP contacts are provided by residues Arg-12, 32-38 (NGSGKSS), and Gln-133. Coiled coils occupy residues 192 to 222 (LENLEKLKNEVSESEILKEEILKKYENLEKL) and 402 to 493 (EELK…LEKT). The Zinc-hook domain maps to 452–556 (ENELKEKYED…KLNEIDSFKL (105 aa)). Zn(2+) contacts are provided by Cys-497 and Cys-500. 3 coiled-coil regions span residues 570–612 (KVEE…LEND), 646–677 (DSSKIENEKKSLENLKDELKNTIYNLEREINL), and 702–731 (ETEKSDFENKLSECKENYEKYMESLAVLKN).

It belongs to the SMC family. RAD50 subfamily. In terms of assembly, homodimer. Forms a heterotetramer composed of two Mre11 subunits and two Rad50 subunits. Requires Zn(2+) as cofactor.

Its function is as follows. Part of the Rad50/Mre11 complex, which is involved in the early steps of DNA double-strand break (DSB) repair. The complex may facilitate opening of the processed DNA ends to aid in the recruitment of HerA and NurA. Rad50 controls the balance between DNA end bridging and DNA resection via ATP-dependent structural rearrangements of the Rad50/Mre11 complex. The chain is DNA double-strand break repair Rad50 ATPase from Methanococcus maripaludis (strain DSM 14266 / JCM 13030 / NBRC 101832 / S2 / LL).